Here is a 23-residue protein sequence, read N- to C-terminus: Hemocyanin subunit 4 (23 aa).

The protein belongs to the tyrosinase family. Hemocyanin subfamily. In terms of tissue distribution, hemolymph.

It localises to the secreted. The protein resides in the extracellular space. Hemocyanins are copper-containing oxygen carriers occurring freely dissolved in the hemolymph of many mollusks and arthropods. This chain is Hemocyanin subunit 4, found in Carcinus maenas (Common shore crab).